A 972-amino-acid polypeptide reads, in one-letter code: 116 kDa U5 small nuclear ribonucleoprotein component (972 aa).

Methionine 1 carries the N-acetylmethionine modification. The disordered stretch occupies residues 1-54 (MDTDLYDEFGNYIGPELDSDEDDDELGRETKDLDEMDDDDDDDDIGDHDDDHPG). Acidic residues-rich tracts occupy residues 17–26 (LDSDEDDDEL) and 34–48 (DEMD…IGDH). Phosphoserine is present on serine 19. Lysine 64 is covalently cross-linked (Glycyl lysine isopeptide (Lys-Gly) (interchain with G-Cter in SUMO1); alternate). Lysine 64 is covalently cross-linked (Glycyl lysine isopeptide (Lys-Gly) (interchain with G-Cter in SUMO2); alternate). Residue threonine 86 is modified to Phosphothreonine. One can recognise a tr-type G domain in the interval 127-409 (ELIRNVTLCG…GIHLTKEELK (283 aa)). Residues 136-143 (GHLHHGKT), 204-208 (DTPGH), and 258-261 (NKID) each bind GTP.

Belongs to the TRAFAC class translation factor GTPase superfamily. Classic translation factor GTPase family. EF-G/EF-2 subfamily. As to quaternary structure, component of the U5 snRNP and the U4/U6-U5 tri-snRNP complex, a building block of the spliceosome. The U4/U6-U5 tri-snRNP complex is composed of the U4, U6 and U5 snRNAs and at least PRPF3, PRPF4, PRPF6, PRPF8, PRPF31, SNRNP200, TXNL4A, SNRNP40, DDX23, CD2BP2, PPIH, SNU13, EFTUD2, SART1 and USP39. Component of the pre-catalytic, catalytic and post-catalytic spliceosome complexes. Component of the minor spliceosome, which splices U12-type introns. Within this complex, interacts with CRIPT. Interacts with ERBB4 and PRPF8. Interacts with PIH1D1. Interacts with RPAP3 and URI1 in a ZNHIT2-dependent manner. Interacts with NRDE2. Interacts with FAM50A. Interacts with UBL5.

Its subcellular location is the nucleus. Functionally, required for pre-mRNA splicing as component of the spliceosome, including pre-catalytic, catalytic and post-catalytic spliceosomal complexes. Component of the U5 snRNP and the U4/U6-U5 tri-snRNP complex, a building block of the spliceosome. As a component of the minor spliceosome, involved in the splicing of U12-type introns in pre-mRNAs. In Pongo abelii (Sumatran orangutan), this protein is 116 kDa U5 small nuclear ribonucleoprotein component (EFTUD2).